We begin with the raw amino-acid sequence, 2027 residues long: Mediator of RNA polymerase II transcription subunit 12 (2027 aa).

Tyr13 is subject to Phosphotyrosine. Disordered stretches follow at residues 170 to 191 (QSTS…TPST), 474 to 516 (GAPG…MDID), 538 to 563 (MPCE…PPKE), and 1088 to 1113 (TVTG…QGGR). Residues Ser482, Ser512, Ser545, and Ser547 each carry the phosphoserine modification. Over residues 549–563 (EKPDVEKEVKPPPKE) the composition is skewed to basic and acidic residues. 2 positions are modified to phosphoserine: Ser1105 and Ser1116. A compositionally biased stretch (low complexity) spans 1241–1258 (AETGSSSGSTASNMPSSS). Disordered stretches follow at residues 1241–1262 (AETG…KTKP), 1297–1321 (ELEK…KSMS), and 1585–1676 (YLEP…PGSI). Composition is skewed to basic and acidic residues over residues 1297–1316 (ELEK…DRQK) and 1605–1618 (EPEK…KTDK). Residues 1463 to 1901 (LAKKLQKELG…VRSTAILPEQ (439 aa)) form an interaction with CTNNB1 and GLI3 region. Over residues 1631-1640 (KKSTKGKKRS) the composition is skewed to basic residues. Lys1645 carries the post-translational modification N6-acetyllysine. Asymmetric dimethylarginine; alternate is present on Arg1746. The residue at position 1746 (Arg1746) is an Omega-N-methylarginine; alternate. Omega-N-methylarginine is present on Arg1757. The tract at residues 1805–1848 (QHTGPAGTMVPPSYSSQPYQSTHPSTNPTLVDPTRHLQQRPSGY) is disordered. Over residues 1815-1830 (PPSYSSQPYQSTHPST) the composition is skewed to low complexity. Asymmetric dimethylarginine is present on residues Arg1844 and Arg1865. 3 stretches are compositionally biased toward low complexity: residues 1965–1975 (QHQQQQQQQAA), 1983–1999 (SQPQ…QQQQ), and 2008–2021 (LQQQ…QPST). Disordered regions lie at residues 1965 to 1999 (QHQQ…QQQQ) and 2008 to 2027 (LQQQ…FGRY).

Belongs to the Mediator complex subunit 12 family. Component of the Mediator complex, which is composed of MED1, MED4, MED6, MED7, MED8, MED9, MED10, MED11, MED12, MED13, MED13L, MED14, MED15, MED16, MED17, MED18, MED19, MED20, MED21, MED22, MED23, MED24, MED25, MED26, MED27, MED29, MED30, MED31, CCNC, CDK8 and CDC2L6/CDK11. The MED12, MED13, CCNC and CDK8 subunits form a distinct module termed the CDK8 module. Mediator containing the CDK8 module is less active than Mediator lacking this module in supporting transcriptional activation. Individual preparations of the Mediator complex lacking one or more distinct subunits have been variously termed ARC, CRSP, DRIP, PC2, SMCC and TRAP. Also interacts with CTNNB1 and GLI3.

Its subcellular location is the nucleus. Component of the Mediator complex, a coactivator involved in the regulated transcription of nearly all RNA polymerase II-dependent genes. Mediator functions as a bridge to convey information from gene-specific regulatory proteins to the basal RNA polymerase II transcription machinery. Mediator is recruited to promoters by direct interactions with regulatory proteins and serves as a scaffold for the assembly of a functional preinitiation complex with RNA polymerase II and the general transcription factors. This subunit may specifically regulate transcription of targets of the Wnt signaling pathway and SHH signaling pathway. The protein is Mediator of RNA polymerase II transcription subunit 12 (MED12) of Pan troglodytes (Chimpanzee).